The chain runs to 525 residues: Calcium uptake protein 1 homolog, mitochondrial (525 aa).

The interval 109 to 146 (ADAGQRPSSAADVNGEDKSSESESEDSEDEEAGSDLHL) is disordered. Residues 130–141 (SESEDSEDEEAG) are compositionally biased toward acidic residues. 2 consecutive EF-hand domains span residues 268-303 (ISRRHFEIAFRMFDLNGDGDVDCEEFEMVATLVRQQ) and 459-494 (LSDHVVDVVFTIFDENNDNQLSNKEFISVMKNRVQR). 10 residues coordinate Ca(2+): Asp-281, Asn-283, Asp-285, Asp-287, Glu-292, Asp-472, Asn-474, Asp-476, Gln-478, and Glu-483.

Belongs to the MICU1 family. MICU1 subfamily.

It is found in the mitochondrion intermembrane space. It localises to the mitochondrion inner membrane. In terms of biological role, calcium sensor of the mitochondrial calcium uniporter (MCU) channel, which senses calcium level via its EF-hand domains. At low calcium levels, MICU1 occludes the pore of the MCU channel, preventing mitochondrial calcium uptake. At higher calcium levels, calcium-binding to MICU1 induces a conformational change that weakens MCU-MICU1 interactions and moves MICU1 away from the pore, allowing calcium permeation through the MCU channel. Also required to protect against manganese toxicity by preventing manganese uptake by MCU. During development, required in alpha/beta or gamma mushroom body neurons to support olfactory intermediate-term memory in the adult. This chain is Calcium uptake protein 1 homolog, mitochondrial, found in Drosophila melanogaster (Fruit fly).